Here is a 52-residue protein sequence, read N- to C-terminus: Large ribosomal subunit protein eL39 (52 aa).

The protein belongs to the eukaryotic ribosomal protein eL39 family.

This is Large ribosomal subunit protein eL39 from Caldivirga maquilingensis (strain ATCC 700844 / DSM 13496 / JCM 10307 / IC-167).